The following is a 557-amino-acid chain: Cytochrome P450 734A2 (557 aa).

A helical membrane pass occupies residues 13–35 (WATWRVAAVAAAAAVWVTMHVAA). Position 495 (Cys-495) interacts with heme.

It belongs to the cytochrome P450 family. The cofactor is heme. As to expression, expressed in roots, shoot apex, leaf sheaths and leaf blades.

The protein resides in the membrane. Cytochrome P450 involved in brassinosteroids (BRs) inactivation and regulation of BRs homeostasis. Is a multifunctional and multisubstrate enzyme that controls the endogenous bioactive BR content both by direct inactivation of castasterone (CS) and by decreasing the levels of BR precursors. Catalyzes the oxidation of carbon 22 hydroxylated BR intermediates to produce C26 oxidized metabolites. The protein is Cytochrome P450 734A2 (CYP734A2) of Oryza sativa subsp. japonica (Rice).